The following is a 246-amino-acid chain: O-antigen export system ATP-binding protein RfbB (246 aa).

In terms of domain architecture, ABC transporter spans 22–246 (SGIKDLVFHP…IIELYKQAMA (225 aa)). An ATP-binding site is contributed by 63-70 (GRNGAGKS).

The protein belongs to the ABC transporter superfamily.

The protein localises to the cell inner membrane. May form an ATP-driven O-antigen export apparatus, in association with RfbA. In Klebsiella pneumoniae, this protein is O-antigen export system ATP-binding protein RfbB (rfbB).